The primary structure comprises 355 residues: Ubiquinone biosynthesis protein COQ4 homolog, mitochondrial (355 aa).

Positions 134, 135, 138, and 150 each coordinate Zn(2+).

This sequence belongs to the COQ4 family. Component of a multi-subunit COQ enzyme complex. Requires Zn(2+) as cofactor.

It is found in the mitochondrion inner membrane. The enzyme catalyses a 4-hydroxy-3-methoxy-5-(all-trans-polyprenyl)benzoate + H(+) = a 2-methoxy-6-(all-trans-polyprenyl)phenol + CO2. The protein operates within cofactor biosynthesis; ubiquinone biosynthesis. In terms of biological role, lyase that catalyzes the C1-decarboxylation of 4-hydroxy-3-methoxy-5-(all-trans-polyprenyl)benzoic acid into 2-methoxy-6-(all-trans-polyprenyl)phenol during ubiquinone biosynthesis. This chain is Ubiquinone biosynthesis protein COQ4 homolog, mitochondrial, found in Plasmodium falciparum (isolate 3D7).